The sequence spans 358 residues: Dual-specificity RNA methyltransferase RlmN (358 aa).

The active-site Proton acceptor is the Glu91. Residues 98–335 (SQGRITQCLS…AIIRKSKGAD (238 aa)) form the Radical SAM core domain. A disulfide bridge links Cys105 with Cys340. 3 residues coordinate [4Fe-4S] cluster: Cys112, Cys116, and Cys119. Residues 164-165 (GE), Ser196, 219-221 (SLH), and Asn295 each bind S-adenosyl-L-methionine. The active-site S-methylcysteine intermediate is the Cys340.

The protein belongs to the radical SAM superfamily. RlmN family. The cofactor is [4Fe-4S] cluster.

It localises to the cytoplasm. It carries out the reaction adenosine(2503) in 23S rRNA + 2 reduced [2Fe-2S]-[ferredoxin] + 2 S-adenosyl-L-methionine = 2-methyladenosine(2503) in 23S rRNA + 5'-deoxyadenosine + L-methionine + 2 oxidized [2Fe-2S]-[ferredoxin] + S-adenosyl-L-homocysteine. It catalyses the reaction adenosine(37) in tRNA + 2 reduced [2Fe-2S]-[ferredoxin] + 2 S-adenosyl-L-methionine = 2-methyladenosine(37) in tRNA + 5'-deoxyadenosine + L-methionine + 2 oxidized [2Fe-2S]-[ferredoxin] + S-adenosyl-L-homocysteine. In terms of biological role, specifically methylates position 2 of adenine 2503 in 23S rRNA and position 2 of adenine 37 in tRNAs. m2A2503 modification seems to play a crucial role in the proofreading step occurring at the peptidyl transferase center and thus would serve to optimize ribosomal fidelity. In Oleidesulfovibrio alaskensis (strain ATCC BAA-1058 / DSM 17464 / G20) (Desulfovibrio alaskensis), this protein is Dual-specificity RNA methyltransferase RlmN.